The following is a 429-amino-acid chain: L-cysteine:1D-myo-inositol 2-amino-2-deoxy-alpha-D-glucopyranoside ligase (429 aa).

A Zn(2+)-binding site is contributed by C60. Residues 60–63, T75, and 98–100 each bind L-cysteinyl-5'-AMP; these read CGIT and NIT. The 'HIGH' region motif lies at 62–72; sequence ITPYDATHLGH. A 'ERGGDP' region motif is present at residues 204 to 209; the sequence is ERGGDP. W244 is a binding site for L-cysteinyl-5'-AMP. A Zn(2+)-binding site is contributed by C248. Position 266–268 (266–268) interacts with L-cysteinyl-5'-AMP; that stretch reads GSD. H273 contacts Zn(2+). L-cysteinyl-5'-AMP is bound at residue I300. Residues 306–310 carry the 'KMSKS' region motif; sequence KMSKS.

This sequence belongs to the class-I aminoacyl-tRNA synthetase family. MshC subfamily. As to quaternary structure, monomer. Zn(2+) serves as cofactor.

The catalysed reaction is 1D-myo-inositol 2-amino-2-deoxy-alpha-D-glucopyranoside + L-cysteine + ATP = 1D-myo-inositol 2-(L-cysteinylamino)-2-deoxy-alpha-D-glucopyranoside + AMP + diphosphate + H(+). Functionally, catalyzes the ATP-dependent condensation of GlcN-Ins and L-cysteine to form L-Cys-GlcN-Ins. The sequence is that of L-cysteine:1D-myo-inositol 2-amino-2-deoxy-alpha-D-glucopyranoside ligase from Mycolicibacterium vanbaalenii (strain DSM 7251 / JCM 13017 / BCRC 16820 / KCTC 9966 / NRRL B-24157 / PYR-1) (Mycobacterium vanbaalenii).